A 72-amino-acid chain; its full sequence is Light-harvesting polypeptide B-885 alpha-1 chain (72 aa).

Over 1 to 16 (SAPAQWKLWLVMDPRT) the chain is Cytoplasmic. Residues 17-37 (VMIGTAAWLGVLALLIHFLLL) form a helical membrane-spanning segment. H33 contributes to the a bacteriochlorophyll binding site. Residues 38-72 (GTERFNWIDTGLKEQKATAAAQAAITPAPVTAAAK) are Periplasmic-facing.

This sequence belongs to the antenna complex alpha subunit family. In terms of assembly, the core complex is formed by different alpha and beta chains, binding bacteriochlorophyll molecules, and arranged most probably in tetrameric structures disposed around the reaction center. The non-pigmented gamma chains may constitute additional components.

Its subcellular location is the cell inner membrane. Functionally, antenna complexes are light-harvesting systems, which transfer the excitation energy to the reaction centers. The protein is Light-harvesting polypeptide B-885 alpha-1 chain of Rhodocyclus tenuis (Rhodospirillum tenue).